We begin with the raw amino-acid sequence, 340 residues long: Lipopolysaccharide core biosynthesis glycosyltransferase LpsE (340 aa).

This sequence belongs to the glycosyltransferase group 1 family. Glycosyltransferase 4 subfamily.

The protein operates within bacterial outer membrane biogenesis; LPS core biosynthesis. This Rhizobium meliloti (strain 1021) (Ensifer meliloti) protein is Lipopolysaccharide core biosynthesis glycosyltransferase LpsE (lpsE).